Here is a 465-residue protein sequence, read N- to C-terminus: Poly(A) polymerase I (465 aa).

Residues aspartate 80, aspartate 82, and aspartate 162 contribute to the active site. The interval 430–465 (APPEQKGMLNELDDDPAPRRRRSRPRKRAPRREGTV) is disordered. Over residues 448–459 (RRRRSRPRKRAP) the composition is skewed to basic residues.

This sequence belongs to the tRNA nucleotidyltransferase/poly(A) polymerase family.

It catalyses the reaction RNA(n) + ATP = RNA(n)-3'-adenine ribonucleotide + diphosphate. In terms of biological role, adds poly(A) tail to the 3' end of many RNAs, which usually targets these RNAs for decay. Plays a significant role in the global control of gene expression, through influencing the rate of transcript degradation, and in the general RNA quality control. The chain is Poly(A) polymerase I from Salmonella typhi.